Reading from the N-terminus, the 311-residue chain is Protoheme IX farnesyltransferase (311 aa).

A run of 9 helical transmembrane segments spans residues 38–58 (IKVV…APDM), 62–82 (YFVQ…AAVI), 113–133 (LIFS…AANW), 134–154 (LTAQ…TMFL), 162–182 (IVIG…SETG), 188–208 (PWIL…ALAI), 230–250 (FTKT…FLPF), 251–271 (LIHM…IIFI), and 286–306 (ALNL…ALFA).

The protein belongs to the UbiA prenyltransferase family. Protoheme IX farnesyltransferase subfamily.

It is found in the cell inner membrane. The enzyme catalyses heme b + (2E,6E)-farnesyl diphosphate + H2O = Fe(II)-heme o + diphosphate. Its pathway is porphyrin-containing compound metabolism; heme O biosynthesis; heme O from protoheme: step 1/1. Converts heme B (protoheme IX) to heme O by substitution of the vinyl group on carbon 2 of heme B porphyrin ring with a hydroxyethyl farnesyl side group. The chain is Protoheme IX farnesyltransferase from Psychromonas ingrahamii (strain DSM 17664 / CCUG 51855 / 37).